A 450-amino-acid polypeptide reads, in one-letter code: Probable ECA polymerase (450 aa).

Helical transmembrane passes span 6–26 (FSGLFVVWLLCTLFIATLTWF), 37–57 (VFFSLLFLLTFFFGFPLTSVL), 63–83 (VGVAPPEILLQALLSAGCFYA), 118–138 (VILMGIALVSVGIFFMHNGFL), 155–175 (GVALKRFFYFFIPAMLVVYFL), 181–201 (AWLFFLVSTVAFGLLTYMIVG), 207–227 (IIIAFAIFLFIGIIRGWISLW), 228–248 (MLAAAGVLGIVGMFWLALKRY), 341–361 (LVVMGGALFIPLGAIVVGLII), 378–398 (YKAAILHSFCFGAIFNMIVLA), and 410–430 (VFFIVVFGACLMIAKLLYWLF).

Belongs to the WzyE family. In terms of assembly, probably part of a complex composed of WzxE, WzyE and WzzE.

It is found in the cell inner membrane. It functions in the pathway bacterial outer membrane biogenesis; enterobacterial common antigen biosynthesis. In terms of biological role, probably involved in the polymerization of enterobacterial common antigen (ECA) trisaccharide repeat units. This Escherichia coli O7:K1 (strain IAI39 / ExPEC) protein is Probable ECA polymerase.